Consider the following 454-residue polypeptide: tRNA modification GTPase MnmE (454 aa).

Arginine 23, glutamate 80, and lysine 120 together coordinate (6S)-5-formyl-5,6,7,8-tetrahydrofolate. Positions 216–377 (GMKVVIAGRP…LRNHLKQSMG (162 aa)) constitute a TrmE-type G domain. Residue asparagine 226 coordinates K(+). Residues 226-231 (NAGKSS), 245-251 (TDIAGTT), 270-273 (DTAG), 335-338 (NKAD), and 358-360 (SAR) contribute to the GTP site. A Mg(2+)-binding site is contributed by serine 230. K(+) contacts are provided by threonine 245, isoleucine 247, and threonine 250. Threonine 251 is a Mg(2+) binding site. Residue lysine 454 participates in (6S)-5-formyl-5,6,7,8-tetrahydrofolate binding.

Belongs to the TRAFAC class TrmE-Era-EngA-EngB-Septin-like GTPase superfamily. TrmE GTPase family. Homodimer. Heterotetramer of two MnmE and two MnmG subunits. K(+) serves as cofactor.

Its subcellular location is the cytoplasm. Its function is as follows. Exhibits a very high intrinsic GTPase hydrolysis rate. Involved in the addition of a carboxymethylaminomethyl (cmnm) group at the wobble position (U34) of certain tRNAs, forming tRNA-cmnm(5)s(2)U34. In Salmonella arizonae (strain ATCC BAA-731 / CDC346-86 / RSK2980), this protein is tRNA modification GTPase MnmE.